We begin with the raw amino-acid sequence, 442 residues long: N-acetyl-S-alkylcysteine sulfoxide monooxygenase (442 aa).

6 residues coordinate FMN: aspartate 58, threonine 95, histidine 145, tyrosine 149, serine 219, and serine 220.

The protein belongs to the NtaA/SnaA/DszA monooxygenase family. As to quaternary structure, homodimer.

The enzyme catalyses (R)-N-acetyl-S-benzyl-L-cysteine sulfoxide + FMNH2 + O2 = N-acetyl-S-hydroxy-L-cysteine + benzaldehyde + FMN + H2O + H(+). The protein operates within amino-acid metabolism. Its function is as follows. Involved in a cysteine salvage pathway from S-alkylcysteine. Catalyzes the C-S bond cleavage in N-acetyl-S-benzyl-L-cysteine sulfoxide leading to N-acetyl-S-hydroxy-L-cysteine and benzaldehyde. This pathway is likely important in the catabolism of alkylated cysteine generated by proteolysis of alkylated glutathione formed in the detoxification of a wide range of electrophiles. Has much less efficient activity with N-acetyl-S-methyl-L-cysteine sulfoxide as substrate. Cannot use S-alkylated L-cysteine sulfones and ketone analogs as substrates, demonstrating that the sulfoxide is required for activity. The protein is N-acetyl-S-alkylcysteine sulfoxide monooxygenase of Bacillus subtilis (strain 168).